Here is a 777-residue protein sequence, read N- to C-terminus: MALASGNRLGSARGQTCADASGRVAPRLLSRACSGSPLALGVLACLGAASSVKPHPRLPATTSAASAPLPARGPAPCAAVPTVVTPDNATGVFEELAAGQQRKYIMISGKGGVGKTSLSASLAVKLAAAGHTTLVVSTDPAHSLSDSLAQDVSGGRPVLLQGTDLPLWGLEIDPEEAKREFFEGSGAGQDGEAGGPSAASQVSDFMNRMGMGFVIDQLKELKLGELLNTPPPGLDEAVAIAKVVQFVQAAEYARFSRIVFDTAPTGHTLRLLALPDFVDASLAKVIRLRKKLNGATSVVRGLFGAGESQDEAVEKLELLQQRVRMVKALFRDKTQTEFIIATIPTYLGVNESSRLLQALRAEQIPCKRIIVNQIVGPQQGDAYLRMKMKDQIAALEMVANDPGLRPLRKVIAPMVDVEVRGVPALSYFGNVVWKDVYDQMNQGADRKFFLLGGKGGVGKTSCSSSLAVHFANDGLPTLVVSTDPAHSLSDAFDQDLSGGSPVKITSPLGDELPLWGLQLDPEQAKAELRAVLADDGGKKLNETLDGLGLGVISDQLKDLQLGELLDTPPPGVDEAIAIAKVVQFLKAPEYSHFKRIVFDTAPTGHTLRLLSLPDFLDASIGKLVRLRQKLSAATSAVKNLFSGGQPGEEDVAVKRLEALQASMEDAKAMFRNQQTTEFIIVTIPTVMATAESCRLASALQHEGIPLKTIIVNQVVQANATDKFLTARRADQARALHHLEEDTGPDGLASLQLIKAPLCDLEVRGVPALSYFGNVVWK.

110 to 117 provides a ligand contact to ATP; that stretch reads KGGVGKTS. Asp139 is an active-site residue. Residues Asn372 and 454–461 each bind ATP; that span reads KGGVGKTS. Residue Asp483 is part of the active site. Asn712 serves as a coordination point for ATP.

It belongs to the arsA ATPase family. As to quaternary structure, monomer. Interacts with TOC34.

It localises to the cytoplasm. It is found in the cytosol. Its function is as follows. ATPase required for the post-translational delivery of tail-anchored (TA) proteins to the chloroplast. Required for the accumulation of TOC34, an essential component of the outer chloroplast membrane translocon (TOC) complex. Recognizes and selectively binds the transmembrane domain of TA proteins in the cytosol. This complex then targets to chloroplast, where the tail-anchored protein is released for insertion. This process is regulated by ATP binding and hydrolysis. This chain is ATPase ARSA1, found in Chlamydomonas reinhardtii (Chlamydomonas smithii).